The primary structure comprises 427 residues: Enolase (427 aa).

Position 162 (glutamine 162) interacts with (2R)-2-phosphoglycerate. The active-site Proton donor is glutamate 204. The Mg(2+) site is built by aspartate 241, glutamate 282, and aspartate 309. Residues lysine 334, arginine 363, serine 364, and lysine 385 each contribute to the (2R)-2-phosphoglycerate site. Lysine 334 serves as the catalytic Proton acceptor.

The protein belongs to the enolase family. Mg(2+) is required as a cofactor.

Its subcellular location is the cytoplasm. It localises to the secreted. The protein localises to the cell surface. It carries out the reaction (2R)-2-phosphoglycerate = phosphoenolpyruvate + H2O. Its pathway is carbohydrate degradation; glycolysis; pyruvate from D-glyceraldehyde 3-phosphate: step 4/5. Functionally, catalyzes the reversible conversion of 2-phosphoglycerate (2-PG) into phosphoenolpyruvate (PEP). It is essential for the degradation of carbohydrates via glycolysis. This Frankia alni (strain DSM 45986 / CECT 9034 / ACN14a) protein is Enolase.